We begin with the raw amino-acid sequence, 256 residues long: Zinc import ATP-binding protein ZnuC (256 aa).

In terms of domain architecture, ABC transporter spans 6 to 221; the sequence is IAAEGLSIRV…PEYRALFGTG (216 aa). 38-45 is a binding site for ATP; it reads GPNGSGKS. Positions 237–256 are disordered; that stretch reads HDDDCGHDHGAEHMHPHGDR.

It belongs to the ABC transporter superfamily. Zinc importer (TC 3.A.1.15.5) family. As to quaternary structure, the complex is composed of two ATP-binding proteins (ZnuC), two transmembrane proteins (ZnuB) and a solute-binding protein (ZnuA).

The protein resides in the cell inner membrane. The enzyme catalyses Zn(2+)(out) + ATP(in) + H2O(in) = Zn(2+)(in) + ADP(in) + phosphate(in) + H(+)(in). In terms of biological role, part of the ABC transporter complex ZnuABC involved in zinc import. Responsible for energy coupling to the transport system. In Ruegeria pomeroyi (strain ATCC 700808 / DSM 15171 / DSS-3) (Silicibacter pomeroyi), this protein is Zinc import ATP-binding protein ZnuC.